A 235-amino-acid polypeptide reads, in one-letter code: ATP phosphoribosyltransferase (235 aa).

This sequence belongs to the ATP phosphoribosyltransferase family. Short subfamily. In terms of assembly, heteromultimer composed of HisG and HisZ subunits.

The protein resides in the cytoplasm. The catalysed reaction is 1-(5-phospho-beta-D-ribosyl)-ATP + diphosphate = 5-phospho-alpha-D-ribose 1-diphosphate + ATP. It participates in amino-acid biosynthesis; L-histidine biosynthesis; L-histidine from 5-phospho-alpha-D-ribose 1-diphosphate: step 1/9. Catalyzes the condensation of ATP and 5-phosphoribose 1-diphosphate to form N'-(5'-phosphoribosyl)-ATP (PR-ATP). Has a crucial role in the pathway because the rate of histidine biosynthesis seems to be controlled primarily by regulation of HisG enzymatic activity. This chain is ATP phosphoribosyltransferase, found in Synechococcus sp. (strain JA-2-3B'a(2-13)) (Cyanobacteria bacterium Yellowstone B-Prime).